A 197-amino-acid chain; its full sequence is Fe/S biogenesis protein NfuA (197 aa).

The [4Fe-4S] cluster site is built by C155 and C158.

The protein belongs to the NfuA family. Homodimer. The cofactor is [4Fe-4S] cluster.

Involved in iron-sulfur cluster biogenesis. Binds a 4Fe-4S cluster, can transfer this cluster to apoproteins, and thereby intervenes in the maturation of Fe/S proteins. Could also act as a scaffold/chaperone for damaged Fe/S proteins. This is Fe/S biogenesis protein NfuA from Pseudomonas syringae pv. syringae (strain B728a).